Reading from the N-terminus, the 94-residue chain is Large ribosomal subunit protein bL25 (94 aa).

The protein belongs to the bacterial ribosomal protein bL25 family. In terms of assembly, part of the 50S ribosomal subunit; part of the 5S rRNA/L5/L18/L25 subcomplex. Contacts the 5S rRNA. Binds to the 5S rRNA independently of L5 and L18.

Its function is as follows. This is one of the proteins that binds to the 5S RNA in the ribosome where it forms part of the central protuberance. The protein is Large ribosomal subunit protein bL25 of Sodalis glossinidius (strain morsitans).